The primary structure comprises 71 residues: Small ribosomal subunit protein bS21 (71 aa).

This sequence belongs to the bacterial ribosomal protein bS21 family.

In Buchnera aphidicola subsp. Cinara cedri (strain Cc), this protein is Small ribosomal subunit protein bS21.